Consider the following 806-residue polypeptide: Phenylalanine--tRNA ligase beta subunit (806 aa).

Positions 39-154 constitute a tRNA-binding domain; the sequence is SAGLKKIVVG…EAIAPGTDVY (116 aa). Residues 410 to 485 enclose the B5 domain; sequence PQPKVIQFDS…RLYGYDNLPS (76 aa). Mg(2+)-binding residues include Asp463, Asp469, Glu472, and Glu473. The FDX-ACB domain occupies 713–806; it reads PKFPEVTRDI…LVATFQAKVR (94 aa).

This sequence belongs to the phenylalanyl-tRNA synthetase beta subunit family. Type 1 subfamily. In terms of assembly, tetramer of two alpha and two beta subunits. Mg(2+) is required as a cofactor.

Its subcellular location is the cytoplasm. The enzyme catalyses tRNA(Phe) + L-phenylalanine + ATP = L-phenylalanyl-tRNA(Phe) + AMP + diphosphate + H(+). This chain is Phenylalanine--tRNA ligase beta subunit, found in Latilactobacillus sakei subsp. sakei (strain 23K) (Lactobacillus sakei subsp. sakei).